A 401-amino-acid polypeptide reads, in one-letter code: Elongation factor Tu 1 (401 aa).

Residues 10–209 (KPHVNVGTIG…AVDEYIPTPV (200 aa)) enclose the tr-type G domain. The interval 19 to 26 (GHVDHGKT) is G1. A GTP-binding site is contributed by 19 to 26 (GHVDHGKT). Thr26 provides a ligand contact to Mg(2+). Residues 60–64 (GITIA) form a G2 region. Residues 81 to 84 (DCPG) are G3. GTP is bound by residues 81–85 (DCPGH) and 136–139 (NKVD). The interval 136–139 (NKVD) is G4. The tract at residues 174-176 (SAL) is G5.

It belongs to the TRAFAC class translation factor GTPase superfamily. Classic translation factor GTPase family. EF-Tu/EF-1A subfamily. In terms of assembly, monomer.

It is found in the cytoplasm. It carries out the reaction GTP + H2O = GDP + phosphate + H(+). Functionally, GTP hydrolase that promotes the GTP-dependent binding of aminoacyl-tRNA to the A-site of ribosomes during protein biosynthesis. The chain is Elongation factor Tu 1 from Roseiflexus castenholzii (strain DSM 13941 / HLO8).